The following is a 119-amino-acid chain: Venom allergen 2 (119 aa).

The protein belongs to the ant venom allergen 2/4 family. As to quaternary structure, homodimer; disulfide-linked. As to expression, expressed by the venom gland.

The protein localises to the secreted. This chain is Venom allergen 2, found in Solenopsis richteri (Black imported fire ant).